A 1032-amino-acid polypeptide reads, in one-letter code: Y' element ATP-dependent helicase YPR204W (1032 aa).

One can recognise a Helicase ATP-binding domain in the interval 1–175; sequence MADTPSVAVQ…LQRIGLTGLA (175 aa). 11 to 18 is an ATP binding site; it reads APPGYGKT. The DEAH box motif lies at 121-124; the sequence is DEFH. The Helicase C-terminal domain occupies 232–381; that stretch reads KLLLALFEIE…EFYGLESKKG (150 aa). Over residues 455–634 the composition is skewed to low complexity; it reads ANASTNATTN…ATTTESTNAS (180 aa). Residues 455-658 are disordered; that stretch reads ANASTNATTN…RFHPVTDINK (204 aa). Residues 635–658 show a composition bias toward basic and acidic residues; it reads AKEDANKDGNAEDNRFHPVTDINK.

Belongs to the helicase family. Yeast subtelomeric Y' repeat subfamily.

Its function is as follows. Catalyzes DNA unwinding and is involved in telomerase-independent telomere maintenance. The polypeptide is Y' element ATP-dependent helicase YPR204W (Saccharomyces cerevisiae (strain ATCC 204508 / S288c) (Baker's yeast)).